Reading from the N-terminus, the 225-residue chain is MAGTGLVAGEVVVDALPYFDQGYEAPGVREAAAALVEEETRRYRPTKNYLSYLTAPDYSAFETDIMRNEFERLAARQPIELLSMKRYELPAPSSGQKNDITAWQECVNNSMAQLEHQAVRIENLELMSQHGCNAWKVYNENLVHMIEHAQKELQKLRKHIQDLNWQRKNMQLTAGSKLREMESNWVSLVSKNYEIERTIVQLENEIYQIKQQHGEANKENIRQDF.

N-acetylalanine is present on Ala2. Phosphoserine is present on Ser94. The stretch at 138–222 (YNENLVHMIE…HGEANKENIR (85 aa)) forms a coiled coil.

This sequence belongs to the SPF27 family. As to quaternary structure, component of the pre-catalytic and catalytic spliceosome complexes. Component of the postcatalytic spliceosome P complex. Component of the PRP19-CDC5L splicing complex composed of a core complex comprising a homotetramer of PRPF19, CDC5L, PLRG1 and BCAS2, and at least three less stably associated proteins CTNNBL1, CWC15 and HSPA8. Interacts directly in the complex with PRPF19, CDC5L and PLRG1. In terms of tissue distribution, ubiquitously expressed.

It localises to the nucleus. The protein resides in the nucleolus. Functionally, required for pre-mRNA splicing as component of the activated spliceosome. Component of the PRP19-CDC5L complex that forms an integral part of the spliceosome and is required for activating pre-mRNA splicing. May have a scaffolding role in the spliceosome assembly as it contacts all other components of the core complex. The PRP19-CDC5L complex may also play a role in the response to DNA damage (DDR). The chain is Pre-mRNA-splicing factor SPF27 (BCAS2) from Homo sapiens (Human).